The following is a 180-amino-acid chain: Large ribosomal subunit protein uL5 (180 aa).

Belongs to the universal ribosomal protein uL5 family. Part of the 50S ribosomal subunit; part of the 5S rRNA/L5/L18/L25 subcomplex. Contacts the 5S rRNA and the P site tRNA. Forms a bridge to the 30S subunit in the 70S ribosome.

Its function is as follows. This is one of the proteins that bind and probably mediate the attachment of the 5S RNA into the large ribosomal subunit, where it forms part of the central protuberance. In the 70S ribosome it contacts protein S13 of the 30S subunit (bridge B1b), connecting the 2 subunits; this bridge is implicated in subunit movement. Contacts the P site tRNA; the 5S rRNA and some of its associated proteins might help stabilize positioning of ribosome-bound tRNAs. The sequence is that of Large ribosomal subunit protein uL5 from Rippkaea orientalis (strain PCC 8801 / RF-1) (Cyanothece sp. (strain PCC 8801)).